Consider the following 179-residue polypeptide: Large ribosomal subunit protein uL10 (179 aa).

It belongs to the universal ribosomal protein uL10 family. Part of the ribosomal stalk of the 50S ribosomal subunit. The N-terminus interacts with L11 and the large rRNA to form the base of the stalk. The C-terminus forms an elongated spine to which L12 dimers bind in a sequential fashion forming a multimeric L10(L12)X complex.

In terms of biological role, forms part of the ribosomal stalk, playing a central role in the interaction of the ribosome with GTP-bound translation factors. In Thermotoga neapolitana (strain ATCC 49049 / DSM 4359 / NBRC 107923 / NS-E), this protein is Large ribosomal subunit protein uL10.